Reading from the N-terminus, the 199-residue chain is 3-isopropylmalate dehydratase small subunit (199 aa).

This sequence belongs to the LeuD family. LeuD type 1 subfamily. In terms of assembly, heterodimer of LeuC and LeuD.

The enzyme catalyses (2R,3S)-3-isopropylmalate = (2S)-2-isopropylmalate. Its pathway is amino-acid biosynthesis; L-leucine biosynthesis; L-leucine from 3-methyl-2-oxobutanoate: step 2/4. In terms of biological role, catalyzes the isomerization between 2-isopropylmalate and 3-isopropylmalate, via the formation of 2-isopropylmaleate. The polypeptide is 3-isopropylmalate dehydratase small subunit (Bacillus licheniformis (strain ATCC 14580 / DSM 13 / JCM 2505 / CCUG 7422 / NBRC 12200 / NCIMB 9375 / NCTC 10341 / NRRL NRS-1264 / Gibson 46)).